The sequence spans 862 residues: MMASYTPMIQQYLKIKAEHQDAFLFFRLGDFYEMFFEDAKKASQELEITLTSRDGGSADKIPMCGVPYHSAAAYIEQLIKKGYKVAICEQTEDPKAAKGVVKREVVQLITPGTVMDGKGIHESENNFIASVSEFRDGYGLALSDLTTGENLAVFIERIEDVMSEIYSVSAKEIVVSSKFNEHTAAQLKERCGATISIEDGEITERIEIAKHLPGEELTETFMRLYTYLQKTQKRSLDHLQPVQVYELEEAMKIDLYSKRNLELTETIRSKSKKGSLLWLLDETKTAMGGRLLKQWIDRPLIRASQIEERQEMVETLINHLFEREDLRERLKEVYDLERLAGRVAFGNVNARDLIQLKESLKQVPSIKELVGSLNHKKAKERAGLIDPCGDLLDLLEEALHENPPLSLKEGNLIKDGYHQKLDEYRDASKNGKDWIARLEQQERAYTGIRSLKVGFNKVFGYYIEVTKANLHLLEDGRYERKQTLTNAERYITPELKEKEALILEAENNICELEYELFAVLREKVKQFIPRLQRLAKQMSELDALQCFATISENRHYTKPVFSDNEVKVIEGRHPVVEKVMDSQEYVPNNCLMGDSREMLLITGPNMSGKSTYMRQIALLSIMAQIGCFVPAKEAVLPIFDQIFTRIGAADDLISGQSTFMVEMLEAKNAIVNATKDSLILFDEIGRGTSTYDGMALAQAIIEYVHDHIGAKTLFSTHYHELTVLEDKLPQLKNVHVRAEEYNGTVVFLHQIKEGAADKSYGIHVAQLAELPDDLISRAQEILKQLEQTGDKPELPAVSEKKSAVREEPAQLSFFADGEKEQKAPAVSNKEKQVLEAFKSINILDMTPLEAMNEMYKLQKKLK.

Residue 603-610 (GPNMSGKS) coordinates ATP.

It belongs to the DNA mismatch repair MutS family.

In terms of biological role, this protein is involved in the repair of mismatches in DNA. It is possible that it carries out the mismatch recognition step. This protein has a weak ATPase activity. This is DNA mismatch repair protein MutS from Bacillus velezensis (strain DSM 23117 / BGSC 10A6 / LMG 26770 / FZB42) (Bacillus amyloliquefaciens subsp. plantarum).